Here is a 457-residue protein sequence, read N- to C-terminus: Multidrug resistance protein MdtK (457 aa).

The next 12 membrane-spanning stretches (helical) occupy residues 11–31 (LLAL…MGFV), 53–73 (IWLP…PVIA), 93–113 (WLAG…GYII), 127–147 (AVGY…FQVA), 160–180 (GMVM…IFIY), 189–209 (GGVG…LAMV), 243–263 (LPIA…ALLV), 276–296 (IALN…AAVT), 314–334 (AART…IFTV), 350–370 (VVTL…SDSI), 387–407 (IFYI…YILA), and 418–438 (PAGF…MMML).

The protein belongs to the multi antimicrobial extrusion (MATE) (TC 2.A.66.1) family. MdtK subfamily.

The protein localises to the cell inner membrane. Its function is as follows. Multidrug efflux pump that functions probably as a Na(+)/drug antiporter. This Escherichia coli O17:K52:H18 (strain UMN026 / ExPEC) protein is Multidrug resistance protein MdtK.